Here is a 297-residue protein sequence, read N- to C-terminus: MSSAHFNRGPAYGLSAEVKNKLAQKYDHQREQELREWIEGVTGRRIGNNFMDGLKDGIILCEFINKLQPGSVKKVNESTQNWHQLENIGNFIKAITKYGVKPHDIFEANDLFENTNHTQVQSTLLALASMAKTKGNKVNVGVKYAEKQERKFEPEKLREGRNIIGLQMGTNKFASQQGMTAYGTRRHLYDPKLGTDQPLDQATISLQMGTNKGASQAGMTAPGTKRQIFEPGLGMEHCDTLNVSLQMGSNKGASQRGMTVYGLPRQVYDPKYCLTPEYPELGEPAHNHHPHNYYNSA.

Residues H28–A131 form the Calponin-homology (CH) domain. Calponin-like repeat units lie at residues I164 to Y189, I204 to F229, and V243 to Y268. T170 carries the phosphothreonine; by ROCK2 modification. S175 carries the phosphoserine; by ROCK2 modification. A phosphothreonine; by ROCK2 mark is found at T180 and T184. T259 is subject to Phosphothreonine; by ROCK2.

It belongs to the calponin family. Part of cGMP kinase signaling complex at least composed of ACTA2/alpha-actin, CNN1/calponin H1, PLN/phospholamban, PRKG1 and ITPR1.

In terms of biological role, thin filament-associated protein that is implicated in the regulation and modulation of smooth muscle contraction. It is capable of binding to actin, calmodulin and tropomyosin. The interaction of calponin with actin inhibits the actomyosin Mg-ATPase activity. This Ovis aries (Sheep) protein is Calponin-1 (CNN1).